Here is a 472-residue protein sequence, read N- to C-terminus: tRNA-2-methylthio-N(6)-dimethylallyladenosine synthase (472 aa).

An MTTase N-terminal domain is found at 22–142; the sequence is RKVFVKTYGC…LPDALKRARA (121 aa). 6 residues coordinate [4Fe-4S] cluster: C31, C67, C105, C183, C187, and C190. The region spanning 169–403 is the Radical SAM core domain; the sequence is RARGVTAFLT…LLVKQQRGFA (235 aa). One can recognise a TRAM domain in the interval 404-466; that stretch reads EACVGREIDL…PNSLFAEMIG (63 aa).

Belongs to the methylthiotransferase family. MiaB subfamily. In terms of assembly, monomer. The cofactor is [4Fe-4S] cluster.

The protein localises to the cytoplasm. The enzyme catalyses N(6)-dimethylallyladenosine(37) in tRNA + (sulfur carrier)-SH + AH2 + 2 S-adenosyl-L-methionine = 2-methylsulfanyl-N(6)-dimethylallyladenosine(37) in tRNA + (sulfur carrier)-H + 5'-deoxyadenosine + L-methionine + A + S-adenosyl-L-homocysteine + 2 H(+). Functionally, catalyzes the methylthiolation of N6-(dimethylallyl)adenosine (i(6)A), leading to the formation of 2-methylthio-N6-(dimethylallyl)adenosine (ms(2)i(6)A) at position 37 in tRNAs that read codons beginning with uridine. This Rhizobium meliloti (strain 1021) (Ensifer meliloti) protein is tRNA-2-methylthio-N(6)-dimethylallyladenosine synthase.